A 161-amino-acid chain; its full sequence is Large-conductance mechanosensitive channel (161 aa).

The next 2 membrane-spanning stretches (helical) occupy residues 21–41 and 79–99; these read VGVI…DGVI and GAFI…FLLV. A compositionally biased stretch (low complexity) spans 142-154; sequence TAAPKAAAAPVAK. The segment at 142–161 is disordered; sequence TAAPKAAAAPVAKPKTKPKA.

This sequence belongs to the MscL family. As to quaternary structure, homopentamer.

It is found in the cell inner membrane. In terms of biological role, channel that opens in response to stretch forces in the membrane lipid bilayer. May participate in the regulation of osmotic pressure changes within the cell. This is Large-conductance mechanosensitive channel from Caulobacter sp. (strain K31).